Here is a 167-residue protein sequence, read N- to C-terminus: Crossover junction endodeoxyribonuclease RuvC (167 aa).

Active-site residues include D11, E71, and D143. The Mg(2+) site is built by D11, E71, and D143.

Belongs to the RuvC family. As to quaternary structure, homodimer which binds Holliday junction (HJ) DNA. The HJ becomes 2-fold symmetrical on binding to RuvC with unstacked arms; it has a different conformation from HJ DNA in complex with RuvA. In the full resolvosome a probable DNA-RuvA(4)-RuvB(12)-RuvC(2) complex forms which resolves the HJ. Mg(2+) serves as cofactor.

It localises to the cytoplasm. The enzyme catalyses Endonucleolytic cleavage at a junction such as a reciprocal single-stranded crossover between two homologous DNA duplexes (Holliday junction).. In terms of biological role, the RuvA-RuvB-RuvC complex processes Holliday junction (HJ) DNA during genetic recombination and DNA repair. Endonuclease that resolves HJ intermediates. Cleaves cruciform DNA by making single-stranded nicks across the HJ at symmetrical positions within the homologous arms, yielding a 5'-phosphate and a 3'-hydroxyl group; requires a central core of homology in the junction. The consensus cleavage sequence is 5'-(A/T)TT(C/G)-3'. Cleavage occurs on the 3'-side of the TT dinucleotide at the point of strand exchange. HJ branch migration catalyzed by RuvA-RuvB allows RuvC to scan DNA until it finds its consensus sequence, where it cleaves and resolves the cruciform DNA. The protein is Crossover junction endodeoxyribonuclease RuvC of Hyphomonas neptunium (strain ATCC 15444).